A 385-amino-acid polypeptide reads, in one-letter code: Zinc cluster transcription factor CZF1 (385 aa).

Residues 1-19 (MSSIPNINWNDPNNGKSNT) show a composition bias toward polar residues. 3 disordered regions span residues 1–117 (MSSI…QQPL), 154–216 (LQQR…QQWD), and 233–308 (SSIQ…KPIT). Over residues 20–38 (SRQSQPQPQLPSNVSPPNS) the composition is skewed to low complexity. 2 stretches are compositionally biased toward polar residues: residues 52 to 67 (YGSSQFSNEYSRNPNT) and 88 to 97 (YPVQQTAQQR). 2 stretches are compositionally biased toward low complexity: residues 102-117 (LQQVHSQQQQQQQQPL) and 154-169 (LQQRQQAQGQQLKSQL). A compositionally biased stretch (polar residues) spans 170-200 (NEQNAMMSASTQQYPVQDFTNPYPNAQNPAE). Low complexity-rich tracts occupy residues 201-214 (QQQQQQPLRTQSQQ) and 233-256 (SSIQQQIPPQNLSPSEQQQVKQQQ). Over residues 265 to 275 (KKKPGRKPKLR) the composition is skewed to basic residues. Positions 279–291 (ESSSETPQVPKTA) are enriched in polar residues. A DNA-binding region (zn(2)-C6 fungal-type) is located at residues 315–342 (CLTCRQRKKRCCETRPRCTECTRLRLNC). The segment at 345-364 (PKPGTEHKNKPKDQKDDENT) is disordered. Basic and acidic residues predominate over residues 348 to 364 (GTEHKNKPKDQKDDENT).

As to quaternary structure, interacts with EFG1.

The protein localises to the nucleus. In terms of biological role, transcriptional regulator of the switch between 2 heritable states, the white and opaque states. These 2 cell types differ in many characteristics, including cell structure, mating competence, and virulence. Each state is heritable for many generations, and switching between states occurs stochastically, at low frequency. Contributes to formation of the opaque state, but is not necessary for heritability of the opaque state. Plays a role in cell adhesion and pseudohyphal growth. Involved in acquisition of drug resistance and acts as a repressor of beta-glucan synthesis, thus negatively regulating cell wall integrity. Plays a role in adherence, invasion and damage to oral epithelial cells. This is Zinc cluster transcription factor CZF1 (CZF1) from Candida albicans (strain SC5314 / ATCC MYA-2876) (Yeast).